A 251-amino-acid polypeptide reads, in one-letter code: Large ribosomal subunit protein uL3 (251 aa).

Gln151 bears the N5-methylglutamine mark. Residues Pro219–Ala251 are disordered. Over residues Glu228 to Thr241 the composition is skewed to low complexity. Positions Pro242–Ala251 are enriched in acidic residues.

The protein belongs to the universal ribosomal protein uL3 family. In terms of assembly, part of the 50S ribosomal subunit. Forms a cluster with proteins L14 and L19. In terms of processing, methylated by PrmB.

One of the primary rRNA binding proteins, it binds directly near the 3'-end of the 23S rRNA, where it nucleates assembly of the 50S subunit. This is Large ribosomal subunit protein uL3 from Parvibaculum lavamentivorans (strain DS-1 / DSM 13023 / NCIMB 13966).